A 337-amino-acid chain; its full sequence is Serpentine receptor class delta-18 (337 aa).

Helical transmembrane passes span 2-22 (IIFF…LNLL), 90-110 (VGLS…LLSF), 130-150 (LILV…TIFA), 187-207 (IYSI…IFIL), 236-256 (ALTI…FYFL), and 270-290 (SIYA…LYFV).

Belongs to the nematode receptor-like protein srd family.

The protein localises to the membrane. The protein is Serpentine receptor class delta-18 (srd-18) of Caenorhabditis elegans.